The sequence spans 445 residues: MAERNEQILTPSQLNALARDLLEGSFPLVWVEAELSSVTRPSSGHLYFTLKDARAQIRCAMFKPKSTWLKFQPREGLRVLARGRLTLYEARGDYQLVLDHMEEAGEGALRRAFDALRARLAAEGLFDAERKQLLPAHVQRLAVITSPSGAAVRDVLSVLARRFPLLEVDLLPSLVQGDSAAAQITSLLQRADASGRYDVILITRGGGSLEDLWAFNDERLARAIAAAQTPVVSAVGHETDFSLSDFVADVRAPTPSVAAELLVPDQRELVPRVRRAQARMTQLQQHALGNAMQRADRLALRLRAHSPQARLQLLHRRQEEAGRQLGARMTQVLERLQARVQRGHAQVQSHNPQRHLAGLQQRLRALHPQAAMQRRLQHDQLQLRSIARSLEAVNPLATVARGYAIVTRPADGSVVRSAAEVAAGERLRAQLADGSIEVRVEPGER.

The protein belongs to the XseA family. In terms of assembly, heterooligomer composed of large and small subunits.

Its subcellular location is the cytoplasm. The catalysed reaction is Exonucleolytic cleavage in either 5'- to 3'- or 3'- to 5'-direction to yield nucleoside 5'-phosphates.. Functionally, bidirectionally degrades single-stranded DNA into large acid-insoluble oligonucleotides, which are then degraded further into small acid-soluble oligonucleotides. The protein is Exodeoxyribonuclease 7 large subunit of Xanthomonas oryzae pv. oryzae (strain PXO99A).